Consider the following 366-residue polypeptide: UDP-N-acetylglucosamine--N-acetylmuramyl-(pentapeptide) pyrophosphoryl-undecaprenol N-acetylglucosamine transferase (366 aa).

Residues 10–12 (TGG), Asn-124, Ser-195, and Gln-295 contribute to the UDP-N-acetyl-alpha-D-glucosamine site.

It belongs to the glycosyltransferase 28 family. MurG subfamily.

Its subcellular location is the cell membrane. The enzyme catalyses di-trans,octa-cis-undecaprenyl diphospho-N-acetyl-alpha-D-muramoyl-L-alanyl-D-glutamyl-meso-2,6-diaminopimeloyl-D-alanyl-D-alanine + UDP-N-acetyl-alpha-D-glucosamine = di-trans,octa-cis-undecaprenyl diphospho-[N-acetyl-alpha-D-glucosaminyl-(1-&gt;4)]-N-acetyl-alpha-D-muramoyl-L-alanyl-D-glutamyl-meso-2,6-diaminopimeloyl-D-alanyl-D-alanine + UDP + H(+). It participates in cell wall biogenesis; peptidoglycan biosynthesis. Cell wall formation. Catalyzes the transfer of a GlcNAc subunit on undecaprenyl-pyrophosphoryl-MurNAc-pentapeptide (lipid intermediate I) to form undecaprenyl-pyrophosphoryl-MurNAc-(pentapeptide)GlcNAc (lipid intermediate II). The chain is UDP-N-acetylglucosamine--N-acetylmuramyl-(pentapeptide) pyrophosphoryl-undecaprenol N-acetylglucosamine transferase from Bacillus licheniformis (strain ATCC 14580 / DSM 13 / JCM 2505 / CCUG 7422 / NBRC 12200 / NCIMB 9375 / NCTC 10341 / NRRL NRS-1264 / Gibson 46).